The sequence spans 51 residues: Insulin (51 aa).

3 disulfides stabilise this stretch: Cys-7-Cys-37, Cys-19-Cys-50, and Cys-36-Cys-41.

This sequence belongs to the insulin family. In terms of assembly, heterodimer of a B chain and an A chain linked by two disulfide bonds.

It is found in the secreted. Insulin decreases blood glucose concentration. It increases cell permeability to monosaccharides, amino acids and fatty acids. It accelerates glycolysis, the pentose phosphate cycle, and glycogen synthesis in liver. This chain is Insulin (INS), found in Capra hircus (Goat).